We begin with the raw amino-acid sequence, 446 residues long: N-succinylarginine dihydrolase (446 aa).

Substrate-binding positions include A19 to S28, N110, and H137 to R138. E174 is a catalytic residue. R213 contacts substrate. The active site involves H249. Substrate contacts are provided by D251 and N364. The active-site Nucleophile is C370.

Belongs to the succinylarginine dihydrolase family. As to quaternary structure, homodimer.

It catalyses the reaction N(2)-succinyl-L-arginine + 2 H2O + 2 H(+) = N(2)-succinyl-L-ornithine + 2 NH4(+) + CO2. Its pathway is amino-acid degradation; L-arginine degradation via AST pathway; L-glutamate and succinate from L-arginine: step 2/5. Its function is as follows. Catalyzes the hydrolysis of N(2)-succinylarginine into N(2)-succinylornithine, ammonia and CO(2). This Burkholderia mallei (strain NCTC 10247) protein is N-succinylarginine dihydrolase.